We begin with the raw amino-acid sequence, 227 residues long: ATP synthase F(0) complex subunit a (227 aa).

6 helical membrane-spanning segments follow: residues Tyr-14–Pro-34, Trp-69–Leu-89, Gln-98–Leu-118, Glu-132–Ile-152, Val-179–Leu-199, and Leu-202–Tyr-222.

Belongs to the ATPase A chain family. Component of the ATP synthase complex composed at least of ATP5F1A/subunit alpha, ATP5F1B/subunit beta, ATP5MC1/subunit c (homooctomer), MT-ATP6/subunit a, MT-ATP8/subunit 8, ATP5ME/subunit e, ATP5MF/subunit f, ATP5MG/subunit g, ATP5MK/subunit k, ATP5MJ/subunit j, ATP5F1C/subunit gamma, ATP5F1D/subunit delta, ATP5F1E/subunit epsilon, ATP5PF/subunit F6, ATP5PB/subunit b, ATP5PD/subunit d, ATP5PO/subunit OSCP. ATP synthase complex consists of a soluble F(1) head domain (subunits alpha(3) and beta(3)) - the catalytic core - and a membrane F(0) domain - the membrane proton channel (subunits c, a, 8, e, f, g, k and j). These two domains are linked by a central stalk (subunits gamma, delta, and epsilon) rotating inside the F1 region and a stationary peripheral stalk (subunits F6, b, d, and OSCP). Interacts with DNAJC30; interaction is direct.

It localises to the mitochondrion inner membrane. It carries out the reaction H(+)(in) = H(+)(out). Subunit a, of the mitochondrial membrane ATP synthase complex (F(1)F(0) ATP synthase or Complex V) that produces ATP from ADP in the presence of a proton gradient across the membrane which is generated by electron transport complexes of the respiratory chain. ATP synthase complex consist of a soluble F(1) head domain - the catalytic core - and a membrane F(1) domain - the membrane proton channel. These two domains are linked by a central stalk rotating inside the F(1) region and a stationary peripheral stalk. During catalysis, ATP synthesis in the catalytic domain of F(1) is coupled via a rotary mechanism of the central stalk subunits to proton translocation. With the subunit c (ATP5MC1), forms the proton-conducting channel in the F(0) domain, that contains two crucial half-channels (inlet and outlet) that facilitate proton movement from the mitochondrial intermembrane space (IMS) into the matrix. Protons are taken up via the inlet half-channel and released through the outlet half-channel, following a Grotthuss mechanism. The chain is ATP synthase F(0) complex subunit a from Formosania lacustris (Oriental stream loach).